A 794-amino-acid polypeptide reads, in one-letter code: ATP-dependent RNA helicase SUPV3L1, mitochondrial (794 aa).

The transit peptide at 1–30 directs the protein to the mitochondrion; sequence MRRCAWPLLRLSSRVGLALRHGGAVRLRQA. The 141-residue stretch at 182-322 folds into the Helicase ATP-binding domain; it reads EARAIQRKII…AIDLVTELMY (141 aa). 195 to 202 provides a ligand contact to ATP; that stretch reads GPTNSGKT. The Helicase C-terminal domain maps to 341–506; it reads VLDYALESLD…GLHPTPEQIE (166 aa). Disordered stretches follow at residues 678–741 and 764–794; these read EVMS…HGRG and EWQD…KKKK. Positions 689 to 704 are enriched in basic and acidic residues; the sequence is TKRDARTVSDHRDAKS.

It belongs to the helicase family. It depends on Mg(2+) as a cofactor. The cofactor is Mn(2+).

The protein resides in the nucleus. Its subcellular location is the mitochondrion matrix. It is found in the mitochondrion nucleoid. It carries out the reaction ATP + H2O = ADP + phosphate + H(+). Its function is as follows. Major helicase player in mitochondrial RNA metabolism. Component of the mitochondrial degradosome (mtEXO) complex, that degrades 3' overhang double-stranded RNA with a 3'-to-5' directionality in an ATP-dependent manner. ATPase and ATP-dependent multisubstrate helicase, able to unwind double-stranded (ds) DNA and RNA, and RNA/DNA heteroduplexes in the 5'-to-3' direction. Plays a role in the RNA surveillance system in mitochondria; regulates the stability of mature mRNAs, the removal of aberrantly formed mRNAs and the rapid degradation of non coding processing intermediates. Also implicated in recombination and chromatin maintenance pathways. May protect cells from apoptosis. Associates with mitochondrial DNA. The polypeptide is ATP-dependent RNA helicase SUPV3L1, mitochondrial (SUPV3L1) (Gallus gallus (Chicken)).